The following is an 88-amino-acid chain: FXYD domain-containing ion transport regulator 4 (88 aa).

Residues Met-1–Ala-20 form the signal peptide. The Extracellular portion of the chain corresponds to Ser-21–Gln-38. A helical transmembrane segment spans residues Leu-39–Gly-59. Over Lys-60–Cys-88 the chain is Cytoplasmic.

This sequence belongs to the FXYD family. Regulatory subunit of the sodium/potassium-transporting ATPase which is composed of a catalytic alpha subunit, a non-catalytic beta subunit and a regulatory subunit. The regulatory subunit, a member of the FXYD protein family, modulates the enzymatic activity in a tissue- and isoform-specific way by changing affinities of the Na+/K+-ATPase toward Na(+), K(+) or ATP.

The protein resides in the cell membrane. It localises to the basolateral cell membrane. Associates with and regulates the activity of the sodium/potassium-transporting ATPase (NKA) which catalyzes the hydrolysis of ATP coupled with the exchange of Na(+) and K(+) ions across the plasma membrane. Increases the apparent affinity of the transporter for Na(+) and increases NKA activity. The protein is FXYD domain-containing ion transport regulator 4 (Fxyd4) of Mus musculus (Mouse).